A 591-amino-acid polypeptide reads, in one-letter code: L-fucose isomerase (591 aa).

Catalysis depends on proton acceptor residues glutamate 337 and aspartate 361. Residues glutamate 337, aspartate 361, and histidine 528 each coordinate Mn(2+).

The protein belongs to the L-fucose isomerase family. Homohexamer. It depends on Mn(2+) as a cofactor.

It localises to the cytoplasm. It carries out the reaction L-fucose = L-fuculose. It functions in the pathway carbohydrate degradation; L-fucose degradation; L-lactaldehyde and glycerone phosphate from L-fucose: step 1/3. Its function is as follows. Converts the aldose L-fucose into the corresponding ketose L-fuculose. This chain is L-fucose isomerase, found in Shigella dysenteriae serotype 1 (strain Sd197).